The chain runs to 219 residues: 7-cyano-7-deazaguanine synthase (219 aa).

Phe10–Leu20 is an ATP binding site. Positions 188, 197, 200, and 203 each coordinate Zn(2+).

The protein belongs to the QueC family. In terms of assembly, homodimer. Zn(2+) is required as a cofactor.

The catalysed reaction is 7-carboxy-7-deazaguanine + NH4(+) + ATP = 7-cyano-7-deazaguanine + ADP + phosphate + H2O + H(+). Its pathway is purine metabolism; 7-cyano-7-deazaguanine biosynthesis. Its function is as follows. Catalyzes the ATP-dependent conversion of 7-carboxy-7-deazaguanine (CDG) to 7-cyano-7-deazaguanine (preQ(0)). In Clostridium botulinum (strain Langeland / NCTC 10281 / Type F), this protein is 7-cyano-7-deazaguanine synthase.